A 325-amino-acid chain; its full sequence is Biotin synthase (325 aa).

The 229-residue stretch at 42–270 folds into the Radical SAM core domain; it reads YKVQLASLLS…QSRVRLSAGR (229 aa). Positions 57, 61, and 64 each coordinate [4Fe-4S] cluster. [2Fe-2S] cluster is bound by residues Cys101, Cys133, Cys193, and Arg265.

The protein belongs to the radical SAM superfamily. Biotin synthase family. As to quaternary structure, homodimer. Requires [4Fe-4S] cluster as cofactor. The cofactor is [2Fe-2S] cluster.

It catalyses the reaction (4R,5S)-dethiobiotin + (sulfur carrier)-SH + 2 reduced [2Fe-2S]-[ferredoxin] + 2 S-adenosyl-L-methionine = (sulfur carrier)-H + biotin + 2 5'-deoxyadenosine + 2 L-methionine + 2 oxidized [2Fe-2S]-[ferredoxin]. Its pathway is cofactor biosynthesis; biotin biosynthesis; biotin from 7,8-diaminononanoate: step 2/2. Catalyzes the conversion of dethiobiotin (DTB) to biotin by the insertion of a sulfur atom into dethiobiotin via a radical-based mechanism. This Synechococcus sp. (strain WH7803) protein is Biotin synthase.